A 97-amino-acid chain; its full sequence is Small ribosomal subunit protein bS16c (97 aa).

The protein belongs to the bacterial ribosomal protein bS16 family.

The protein localises to the plastid. It is found in the chloroplast. This chain is Small ribosomal subunit protein bS16c, found in Piper cenocladum (Ant piper).